Reading from the N-terminus, the 588-residue chain is MSVIKKLPQEVVSKIAAGEVVINPASVVKELVENSLDANATSIEVQIRNGGKSYIKVSDNGIGMSRDDMLIAIDRFTTSKISALEDIYNIHSYGFRGEALSSIAEVSRLIITSSDGNNAHRLEVIGGKIIKITETHRERGTTVEVYDLFFNIPARRKFLSSEKVETRMVTEIVEKFMLVQPSVSFVFKIEDEIVYNASKGSLEDRFSIIFPEVKEFSLIEPLQSEIMQISGIISSPQYTRRNRSGQIFFVNKRFVIDNLLNLSFERGYGEALAQGEHPYGVIFLDFLPDKIDVNIHPQKLQVKFSDPQNVYNEIARTIRTTLRKFSFFQMSISKNSEEEEKYSSEISNQNLKAENYQHTDSEWYPNQFKNLYQKETPQTYRPYEPLSSISQNLLLPQLNEKSLPKEFIVLKDRYIVFEDLDGLVIIDFHAAHERIIYEQLKENKFETVQLLIPLHIKLGKSFLQLSQQLTDEFKKYGFDFEIKTLEDGSGEVVIKQIPSILKVTDASNVFLEVLEEYRIPFEKPKGLTYVLASKACKSAVKTGDKLSHDEVQQIIKEIKSKNLLTCPHGRPIMMKLSFSQLDSFFERI.

The protein belongs to the DNA mismatch repair MutL/HexB family.

Functionally, this protein is involved in the repair of mismatches in DNA. It is required for dam-dependent methyl-directed DNA mismatch repair. May act as a 'molecular matchmaker', a protein that promotes the formation of a stable complex between two or more DNA-binding proteins in an ATP-dependent manner without itself being part of a final effector complex. The sequence is that of DNA mismatch repair protein MutL from Fervidobacterium nodosum (strain ATCC 35602 / DSM 5306 / Rt17-B1).